The chain runs to 279 residues: Acetyl-coenzyme A carboxylase carboxyl transferase subunit beta (279 aa).

The 257-residue stretch at 23 to 279 folds into the CoA carboxyltransferase N-terminal domain; the sequence is MWWKCDECGA…IVRLMTMLAP (257 aa). The Zn(2+) site is built by C27, C30, C46, and C49. The segment at 27–49 adopts a C4-type zinc-finger fold; sequence CDECGAMLHKKQLEDNFYTCSEC.

Belongs to the AccD/PCCB family. In terms of assembly, acetyl-CoA carboxylase is a heterohexamer composed of biotin carboxyl carrier protein (AccB), biotin carboxylase (AccC) and two subunits each of ACCase subunit alpha (AccA) and ACCase subunit beta (AccD). Zn(2+) is required as a cofactor.

Its subcellular location is the cytoplasm. The enzyme catalyses N(6)-carboxybiotinyl-L-lysyl-[protein] + acetyl-CoA = N(6)-biotinyl-L-lysyl-[protein] + malonyl-CoA. The protein operates within lipid metabolism; malonyl-CoA biosynthesis; malonyl-CoA from acetyl-CoA: step 1/1. Its function is as follows. Component of the acetyl coenzyme A carboxylase (ACC) complex. Biotin carboxylase (BC) catalyzes the carboxylation of biotin on its carrier protein (BCCP) and then the CO(2) group is transferred by the transcarboxylase to acetyl-CoA to form malonyl-CoA. This chain is Acetyl-coenzyme A carboxylase carboxyl transferase subunit beta, found in Chlorobium phaeobacteroides (strain DSM 266 / SMG 266 / 2430).